Here is an 86-residue protein sequence, read N- to C-terminus: Large ribosomal subunit protein bL31B (86 aa).

Belongs to the bacterial ribosomal protein bL31 family. Type B subfamily. In terms of assembly, part of the 50S ribosomal subunit.

This chain is Large ribosomal subunit protein bL31B, found in Yersinia pseudotuberculosis serotype O:1b (strain IP 31758).